Reading from the N-terminus, the 238-residue chain is Large ribosomal subunit protein uL1 (238 aa).

The protein belongs to the universal ribosomal protein uL1 family. As to quaternary structure, part of the 50S ribosomal subunit.

Binds directly to 23S rRNA. The L1 stalk is quite mobile in the ribosome, and is involved in E site tRNA release. Its function is as follows. Protein L1 is also a translational repressor protein, it controls the translation of the L11 operon by binding to its mRNA. In Saccharopolyspora erythraea (strain ATCC 11635 / DSM 40517 / JCM 4748 / NBRC 13426 / NCIMB 8594 / NRRL 2338), this protein is Large ribosomal subunit protein uL1.